We begin with the raw amino-acid sequence, 259 residues long: MRGPKKHLKRLAAPSHWMLDKLGGVFAVRPNPGPHKLRESLPLSLFLRNRLKYALNYTEAKKILTQRVVRVDGKVRTCHKFPTGFMDVVAIERTNEYFRMLYDTKGRYVVHRIQAAEADFKLCKVKSVRTVNKGVPVLTTTDGRTIRYPDPHVKVNDTIVFNISTQKITDSVKFEPGNLAYVTGGRNVGRVGIIGHRERLPGASDIIHIKDSAGHSFATRISNVFVIGKGNKALVSLPTGAGIRLSIAEERDKRMAQKH.

In terms of domain architecture, S4 RNA-binding spans 41-100 (LPLSLFLRNRLKYALNYTEAKKILTQRVVRVDGKVRTCHKFPTGFMDVVAIERTNEYFRM).

This sequence belongs to the eukaryotic ribosomal protein eS4 family.

This chain is Small ribosomal subunit protein eS4 (rps-4), found in Caenorhabditis elegans.